Reading from the N-terminus, the 359-residue chain is DNA integrity scanning protein DisA (359 aa).

Positions 7 to 146 (DDIFRATLAA…GRRYVLDGSA (140 aa)) constitute a DAC domain. ATP-binding positions include G74, L92, and 105-109 (TRHRT).

It belongs to the DisA family. Homooctamer. Mg(2+) is required as a cofactor.

The enzyme catalyses 2 ATP = 3',3'-c-di-AMP + 2 diphosphate. Functionally, participates in a DNA-damage check-point that is active prior to asymmetric division when DNA is damaged. DisA forms globular foci that rapidly scan along the chromosomes during sporulation, searching for lesions. When a lesion is present, DisA pauses at the lesion site. This triggers a cellular response that culminates in a temporary block in sporulation initiation. Also has diadenylate cyclase activity, catalyzing the condensation of 2 ATP molecules into cyclic di-AMP (c-di-AMP). c-di-AMP acts as a signaling molecule that couples DNA integrity with progression of sporulation. The rise in c-di-AMP level generated by DisA while scanning the chromosome, operates as a positive signal that advances sporulation; upon encountering a lesion, the DisA focus arrests at the damaged site and halts c-di-AMP synthesis. The chain is DNA integrity scanning protein DisA from Frankia alni (strain DSM 45986 / CECT 9034 / ACN14a).